Consider the following 204-residue polypeptide: Somatotropin (204 aa).

Residues 1 to 17 (MDRAILLLSVLSVGVSS) form the signal peptide. Q18 bears the Pyrrolidone carboxylic acid mark. Residue H35 participates in Zn(2+) binding. A disulfide bond links C69 and C177. E186 contributes to the Zn(2+) binding site. C194 and C202 are disulfide-bonded.

This sequence belongs to the somatotropin/prolactin family.

It localises to the secreted. Its function is as follows. Growth hormone plays an important role in growth control and is involved in the regulation of several anabolic processes. Implicated as an osmoregulatory substance important for seawater adaptation. This is Somatotropin (gh) from Dicentrarchus labrax (European seabass).